Here is a 571-residue protein sequence, read N- to C-terminus: Urease subunit alpha (571 aa).

The 439-residue stretch at 133 to 571 (GGVDSHIHFI…LPLAQRYFLF (439 aa)) folds into the Urease domain. Histidine 138, histidine 140, and lysine 221 together coordinate Ni(2+). Position 221 is an N6-carboxylysine (lysine 221). Histidine 223 contributes to the substrate binding site. Residues histidine 250 and histidine 276 each contribute to the Ni(2+) site. The active-site Proton donor is the histidine 324. Aspartate 364 lines the Ni(2+) pocket.

It belongs to the metallo-dependent hydrolases superfamily. Urease alpha subunit family. As to quaternary structure, heterotrimer of UreA (gamma), UreB (beta) and UreC (alpha) subunits. Three heterotrimers associate to form the active enzyme. The cofactor is Ni cation. Post-translationally, carboxylation allows a single lysine to coordinate two nickel ions.

The protein resides in the cytoplasm. It carries out the reaction urea + 2 H2O + H(+) = hydrogencarbonate + 2 NH4(+). It functions in the pathway nitrogen metabolism; urea degradation; CO(2) and NH(3) from urea (urease route): step 1/1. This is Urease subunit alpha from Anaeromyxobacter sp. (strain Fw109-5).